The chain runs to 145 residues: Large ribosomal subunit protein uL15 (145 aa).

Positions 1–30 are enriched in basic residues; that stretch reads MAHSLRKTRKLRGHVSHGHGRIGKHRKHPG. The segment at 1–48 is disordered; that stretch reads MAHSLRKTRKLRGHVSHGHGRIGKHRKHPGGRGNAGGQHHHRINRDKY.

It belongs to the universal ribosomal protein uL15 family. Component of the large ribosomal subunit.

It localises to the cytoplasm. The protein resides in the cytosol. It is found in the rough endoplasmic reticulum. In terms of biological role, component of the large ribosomal subunit. This chain is Large ribosomal subunit protein uL15 (rpl-27a), found in Oscheius tipulae.